We begin with the raw amino-acid sequence, 88 residues long: CLAVATA3/ESR (CLE)-related protein 42 (88 aa).

Positions 1–24 (MRSPHITISLVFLFFLFLIIQTHQ) are cleaved as a signal peptide. Positions 69-88 (KMIGANEHGVPSGPNPISNR) are disordered. 2 positions are modified to hydroxyproline: P79 and P82. O-linked (Ara...) hydroxyproline glycosylation occurs at P82.

Belongs to the CLV3/ESR signal peptide family. The O-glycosylation (arabinosylation) of the hydroxyproline Pro-82 enhances binding affinity of the CLE42p peptide for its receptor. In terms of tissue distribution, expressed at low levels in seedlings, roots and inflorescence.

It is found in the secreted. Its subcellular location is the extracellular space. Functionally, extracellular signal peptide that regulates cell fate. Represses tracheary element differentiation but promotes the formation of procambial cells. The protein is CLAVATA3/ESR (CLE)-related protein 42 of Arabidopsis thaliana (Mouse-ear cress).